We begin with the raw amino-acid sequence, 133 residues long: Large ribosomal subunit protein eL32y (133 aa).

Belongs to the eukaryotic ribosomal protein eL32 family.

The sequence is that of Large ribosomal subunit protein eL32y (RPL32B) from Arabidopsis thaliana (Mouse-ear cress).